A 57-amino-acid chain; its full sequence is Small ribosomal subunit protein eS31 (57 aa).

4 residues coordinate Zn(2+): Cys29, Cys32, Cys47, and Cys50. The C4-type zinc finger occupies 29–50 (CPRCGPGVFMANHKDRWSCGRC).

This sequence belongs to the eukaryotic ribosomal protein eS31 family. In terms of assembly, part of the 30S ribosomal subunit. Zn(2+) is required as a cofactor.

In Thermococcus kodakarensis (strain ATCC BAA-918 / JCM 12380 / KOD1) (Pyrococcus kodakaraensis (strain KOD1)), this protein is Small ribosomal subunit protein eS31.